The sequence spans 338 residues: 1-aminocyclopropane-1-carboxylate deaminase (338 aa).

At K51 the chain carries N6-(pyridoxal phosphate)lysine. Catalysis depends on S78, which acts as the Nucleophile.

Belongs to the ACC deaminase/D-cysteine desulfhydrase family. As to quaternary structure, homotrimer. Pyridoxal 5'-phosphate serves as cofactor.

The enzyme catalyses 1-aminocyclopropane-1-carboxylate + H2O = 2-oxobutanoate + NH4(+). Its function is as follows. Catalyzes a cyclopropane ring-opening reaction, the irreversible conversion of 1-aminocyclopropane-1-carboxylate (ACC) to ammonia and alpha-ketobutyrate. Allows growth on ACC as a nitrogen source. The protein is 1-aminocyclopropane-1-carboxylate deaminase of Ralstonia pickettii (strain 12J).